Reading from the N-terminus, the 906-residue chain is MLSLVQKIIGSRNERFIKKVSRIVQKINSLEPEFEKLSDEQLKAKTFEYRERLANGEILDNLLPEAFATVREAGKRTKNMRHYDVQLIGGIVLHQGKVAEMRTGEGKTLVATLPAYLNALTCDGVHVITVNDYLAKRDAELMSDIYEFLGMSVGVIVADLNPQQRKEAYACDITYGTNNEFGFDYLRDNMAYEKEQQVQRSRNYAIIDEVDSILIDEARTPLIISGASDDSSEMYNLFNRLVPYLEKQEKEEVENEQEQRDFYVDEKSKNAYLTEKGYAKIENMLKKEGILEEDDNLYSPHNITKMHYLNACLRAHSLYQLNIDYIVRDREIVIIDESTGRAMPGRRWSDGLHQAIEAKEGVKINAENQTMASITFQNFFKLYNKIAGMTGTADTEAFELHSIYGLEVIIIPTNKPMIRKDHHDEIYGSVREKFDAIVEDIKERISKGQPVLVGTASIEASEVLSTLLKKKKIRHNVLNAKQHEKEASIIAMAGYPDNVTIATNMAGRGTDIILGGNLEVEIAQLEDPTPEDIAQIKAEWLKRNEAVKKAGGLCIIGSERHDSRRIDNQLRGRAARQGDPGESKFYLSMDDNLLRIFASQSMAERVKKGLKGGESLAFGFMSKVISKAQGKVESYHFDIRKNLLEYDNVVNTQRKVIYEQRQSFLEAEDVSDILADIRIDVAEQLFHDYVPAGSMHELWDLEGLEKALKSDFMIELDLQKLYEEDDSLGEEDLKRLVREAIEIEFVEKTKNLDSGAVRQFEKFSLLQSLDTHWREHLSSIDHLRNSINLRGYAQKDPKNEYKKEAFELFSTMLDNFKYEVISSLAKIRIVTEEETQRAQQEWQESMSDIKAEHESVIDNNQRHDEDEQEEAPKVQQVRREGPKVKRNDPCPCGSGKKYKQCHSKVE.

Residues Gln86, 104-108, and Asp511 each bind ATP; that span reads GEGKT. 2 stretches are compositionally biased toward basic and acidic residues: residues 853–865 and 877–888; these read HESVIDNNQRHDE and VRREGPKVKRND. Positions 853-906 are disordered; the sequence is HESVIDNNQRHDEDEQEEAPKVQQVRREGPKVKRNDPCPCGSGKKYKQCHSKVE. Residues Cys890, Cys892, Cys901, and His902 each contribute to the Zn(2+) site. Positions 896 to 906 are enriched in basic residues; it reads KKYKQCHSKVE.

It belongs to the SecA family. In terms of assembly, monomer and homodimer. Part of the essential Sec protein translocation apparatus which comprises SecA, SecYEG and auxiliary proteins SecDF-YajC and YidC. The cofactor is Zn(2+).

The protein localises to the cell inner membrane. Its subcellular location is the cytoplasm. It catalyses the reaction ATP + H2O + cellular proteinSide 1 = ADP + phosphate + cellular proteinSide 2.. In terms of biological role, part of the Sec protein translocase complex. Interacts with the SecYEG preprotein conducting channel. Has a central role in coupling the hydrolysis of ATP to the transfer of proteins into and across the cell membrane, serving both as a receptor for the preprotein-SecB complex and as an ATP-driven molecular motor driving the stepwise translocation of polypeptide chains across the membrane. This is Protein translocase subunit SecA from Francisella tularensis subsp. mediasiatica (strain FSC147).